A 209-amino-acid polypeptide reads, in one-letter code: Uracil phosphoribosyltransferase (209 aa).

Residues Arg-79, Arg-104, and 131–139 (DPMLATGGS) contribute to the 5-phospho-alpha-D-ribose 1-diphosphate site. Uracil contacts are provided by residues Ile-194 and 199–201 (GDA). Asp-200 provides a ligand contact to 5-phospho-alpha-D-ribose 1-diphosphate.

The protein belongs to the UPRTase family. It depends on Mg(2+) as a cofactor.

The enzyme catalyses UMP + diphosphate = 5-phospho-alpha-D-ribose 1-diphosphate + uracil. The protein operates within pyrimidine metabolism; UMP biosynthesis via salvage pathway; UMP from uracil: step 1/1. With respect to regulation, allosterically activated by GTP. Functionally, catalyzes the conversion of uracil and 5-phospho-alpha-D-ribose 1-diphosphate (PRPP) to UMP and diphosphate. In Clostridium botulinum (strain Alaska E43 / Type E3), this protein is Uracil phosphoribosyltransferase.